Here is a 70-residue protein sequence, read N- to C-terminus: DNA-directed RNA polymerase subunit omega (70 aa).

Belongs to the RNA polymerase subunit omega family. As to quaternary structure, the RNAP catalytic core consists of 2 alpha, 1 beta, 1 beta' and 1 omega subunit. When a sigma factor is associated with the core the holoenzyme is formed, which can initiate transcription.

The enzyme catalyses RNA(n) + a ribonucleoside 5'-triphosphate = RNA(n+1) + diphosphate. In terms of biological role, promotes RNA polymerase assembly. Latches the N- and C-terminal regions of the beta' subunit thereby facilitating its interaction with the beta and alpha subunits. This Staphylococcus epidermidis (strain ATCC 35984 / DSM 28319 / BCRC 17069 / CCUG 31568 / BM 3577 / RP62A) protein is DNA-directed RNA polymerase subunit omega.